The sequence spans 345 residues: D-fructose 1,6-bisphosphatase class 2/sedoheptulose 1,7-bisphosphatase (345 aa).

The Mn(2+) site is built by aspartate 33, glutamate 57, aspartate 97, and glutamate 100. Substrate is bound by residues 100-102 (EGT), tyrosine 131, 176-178 (RPR), and 198-200 (DGD). Glutamate 225 contributes to the Mn(2+) binding site.

It belongs to the FBPase class 2 family. Homotetramer. Mn(2+) serves as cofactor.

It carries out the reaction beta-D-fructose 1,6-bisphosphate + H2O = beta-D-fructose 6-phosphate + phosphate. The enzyme catalyses D-sedoheptulose 1,7-bisphosphate + H2O = D-sedoheptulose 7-phosphate + phosphate. It participates in carbohydrate biosynthesis; Calvin cycle. Its activity is regulated as follows. Inhibited by AMP and slightly innibited by hydrogen peroxyde. Its function is as follows. Catalyzes the hydrolysis of fructose 1,6-bisphosphate (Fru 1,6-P2) and sedoheptulose 1,7-bisphosphate (Sed 1,7-P2) to fructose 6-phosphate and sedoheptulose 7-phosphate, respectively. This is D-fructose 1,6-bisphosphatase class 2/sedoheptulose 1,7-bisphosphatase from Synechococcus elongatus (strain ATCC 33912 / PCC 7942 / FACHB-805) (Anacystis nidulans R2).